The following is a 173-amino-acid chain: 3-hydroxydecanoyl-[acyl-carrier-protein] dehydratase (173 aa).

The active site involves histidine 71.

The protein belongs to the thioester dehydratase family. FabA subfamily. In terms of assembly, homodimer.

The protein resides in the cytoplasm. The enzyme catalyses a (3R)-hydroxyacyl-[ACP] = a (2E)-enoyl-[ACP] + H2O. The catalysed reaction is (3R)-hydroxydecanoyl-[ACP] = (2E)-decenoyl-[ACP] + H2O. It catalyses the reaction (2E)-decenoyl-[ACP] = (3Z)-decenoyl-[ACP]. It participates in lipid metabolism; fatty acid biosynthesis. Necessary for the introduction of cis unsaturation into fatty acids. Catalyzes the dehydration of (3R)-3-hydroxydecanoyl-ACP to E-(2)-decenoyl-ACP and then its isomerization to Z-(3)-decenoyl-ACP. Can catalyze the dehydratase reaction for beta-hydroxyacyl-ACPs with saturated chain lengths up to 16:0, being most active on intermediate chain length. This is 3-hydroxydecanoyl-[acyl-carrier-protein] dehydratase from Bradyrhizobium diazoefficiens (strain JCM 10833 / BCRC 13528 / IAM 13628 / NBRC 14792 / USDA 110).